The primary structure comprises 322 residues: Acetyl-coenzyme A carboxylase carboxyl transferase subunit alpha (322 aa).

The CoA carboxyltransferase C-terminal domain occupies 40-297 (PLQKKLGDLR…RETLTRNLEE (258 aa)).

The protein belongs to the AccA family. In terms of assembly, acetyl-CoA carboxylase is a heterohexamer composed of biotin carboxyl carrier protein (AccB), biotin carboxylase (AccC) and two subunits each of ACCase subunit alpha (AccA) and ACCase subunit beta (AccD).

It is found in the cytoplasm. The catalysed reaction is N(6)-carboxybiotinyl-L-lysyl-[protein] + acetyl-CoA = N(6)-biotinyl-L-lysyl-[protein] + malonyl-CoA. Its pathway is lipid metabolism; malonyl-CoA biosynthesis; malonyl-CoA from acetyl-CoA: step 1/1. Component of the acetyl coenzyme A carboxylase (ACC) complex. First, biotin carboxylase catalyzes the carboxylation of biotin on its carrier protein (BCCP) and then the CO(2) group is transferred by the carboxyltransferase to acetyl-CoA to form malonyl-CoA. The sequence is that of Acetyl-coenzyme A carboxylase carboxyl transferase subunit alpha from Gemmatimonas aurantiaca (strain DSM 14586 / JCM 11422 / NBRC 100505 / T-27).